Consider the following 236-residue polypeptide: Large ribosomal subunit protein uL2 (236 aa).

Positions 198–236 (DHPFGGGGRQHPGRPKTVSRGTPPGRKVGSIAARRTGKR) are disordered.

It belongs to the universal ribosomal protein uL2 family. Part of the 50S ribosomal subunit. Forms a bridge to the 30S subunit in the 70S ribosome.

Functionally, one of the primary rRNA binding proteins. Required for association of the 30S and 50S subunits to form the 70S ribosome, for tRNA binding and peptide bond formation. It has been suggested to have peptidyltransferase activity; this is somewhat controversial. Makes several contacts with the 16S rRNA in the 70S ribosome. The chain is Large ribosomal subunit protein uL2 from Methanothrix thermoacetophila (strain DSM 6194 / JCM 14653 / NBRC 101360 / PT) (Methanosaeta thermophila).